A 435-amino-acid polypeptide reads, in one-letter code: 3-phosphoshikimate 1-carboxyvinyltransferase (435 aa).

3-phosphoshikimate-binding residues include Lys-21, Ser-22, and Arg-26. A phosphoenolpyruvate-binding site is contributed by Lys-21. 2 residues coordinate phosphoenolpyruvate: Gly-98 and Arg-126. Positions 169, 170, 171, 197, 312, and 339 each coordinate 3-phosphoshikimate. Gln-171 contributes to the phosphoenolpyruvate binding site. Catalysis depends on Asp-312, which acts as the Proton acceptor. Phosphoenolpyruvate-binding residues include Arg-343, Arg-386, and Lys-412.

The protein belongs to the EPSP synthase family. As to quaternary structure, monomer.

It is found in the cytoplasm. The enzyme catalyses 3-phosphoshikimate + phosphoenolpyruvate = 5-O-(1-carboxyvinyl)-3-phosphoshikimate + phosphate. It participates in metabolic intermediate biosynthesis; chorismate biosynthesis; chorismate from D-erythrose 4-phosphate and phosphoenolpyruvate: step 6/7. In terms of biological role, catalyzes the transfer of the enolpyruvyl moiety of phosphoenolpyruvate (PEP) to the 5-hydroxyl of shikimate-3-phosphate (S3P) to produce enolpyruvyl shikimate-3-phosphate and inorganic phosphate. This Clostridium beijerinckii (strain ATCC 51743 / NCIMB 8052) (Clostridium acetobutylicum) protein is 3-phosphoshikimate 1-carboxyvinyltransferase.